A 246-amino-acid polypeptide reads, in one-letter code: Triosephosphate isomerase (246 aa).

Residue 9-11 (NWK) participates in substrate binding. Residue histidine 91 is the Electrophile of the active site. The active-site Proton acceptor is the glutamate 161. Substrate contacts are provided by residues glycine 167, serine 206, and 227 to 228 (GG).

This sequence belongs to the triosephosphate isomerase family. As to quaternary structure, homodimer.

It localises to the cytoplasm. The catalysed reaction is D-glyceraldehyde 3-phosphate = dihydroxyacetone phosphate. It participates in carbohydrate biosynthesis; gluconeogenesis. The protein operates within carbohydrate degradation; glycolysis; D-glyceraldehyde 3-phosphate from glycerone phosphate: step 1/1. In terms of biological role, involved in the gluconeogenesis. Catalyzes stereospecifically the conversion of dihydroxyacetone phosphate (DHAP) to D-glyceraldehyde-3-phosphate (G3P). The chain is Triosephosphate isomerase from Ruegeria sp. (strain TM1040) (Silicibacter sp.).